The chain runs to 27 residues: Small integral membrane protein 43 (27 aa).

The segment at 15-21 is important for interaction with SLC2A1 and SLC2A3; sequence HREPWGF.

As to quaternary structure, interacts with glucose transporters SLC2A1/GLUT1 and SLC2A3/GLUT3; the interactions may promote SLC2A1- and SLC2A3-mediated glucose transport to meet the energy needs of mesendoderm differentiation.

The protein resides in the cell membrane. Functionally, required for mesendoderm differentiation. Interacts with glucose transporters and promotes glucose uptake. Probably augments the glucose uptake capacity of glucose transporter proteins to meet the energy needs of mesendoderm differentiation. The protein is Small integral membrane protein 43 of Pongo abelii (Sumatran orangutan).